A 303-amino-acid polypeptide reads, in one-letter code: Cathepsin B-like CP1 (303 aa).

The first 19 residues, 1-19 (MALSLLLAVVCAKPLVSRA), serve as a signal peptide directing secretion. Asn-41 is a glycosylation site (N-linked (GlcNAc...) asparagine). 3 disulfide bridges follow: Cys-92–Cys-119, Cys-102–Cys-145, and Cys-138–Cys-181. The active site involves Cys-105. Catalysis depends on residues His-249 and Asn-270.

It belongs to the peptidase C1 family.

It is found in the vacuole. Thiol protease which is required for parasite excystation and invasion of the proximal small intestine of the human host. The polypeptide is Cathepsin B-like CP1 (CP1) (Giardia intestinalis (Giardia lamblia)).